Consider the following 362-residue polypeptide: Dihydroorotate dehydrogenase (quinone) (362 aa).

FMN contacts are provided by residues 62–66 and T86; that span reads AGYDK. K66 is a substrate binding site. 111–115 is a binding site for substrate; it reads NRLGF. FMN-binding residues include N139 and N170. N170 is a substrate binding site. S173 (nucleophile) is an active-site residue. N175 serves as a coordination point for substrate. 2 residues coordinate FMN: K215 and S243. Position 244–245 (244–245) interacts with substrate; sequence NT. FMN-binding positions include G266, G295, and 316 to 317; that span reads YS.

Belongs to the dihydroorotate dehydrogenase family. Type 2 subfamily. In terms of assembly, monomer. FMN is required as a cofactor.

It localises to the cell membrane. The enzyme catalyses (S)-dihydroorotate + a quinone = orotate + a quinol. The protein operates within pyrimidine metabolism; UMP biosynthesis via de novo pathway; orotate from (S)-dihydroorotate (quinone route): step 1/1. Functionally, catalyzes the conversion of dihydroorotate to orotate with quinone as electron acceptor. This Rhizobium etli (strain CIAT 652) protein is Dihydroorotate dehydrogenase (quinone).